The following is a 23-amino-acid chain: Ocellatin-LB2 (23 aa).

The residue at position 23 (Asn-23) is an Asparagine amide.

In terms of tissue distribution, expressed by the skin glands.

The protein resides in the secreted. Its function is as follows. Antibacterial peptide that inhibits the Gram-negative bacterium A.actinomycetemcomitans ATCC 29522 (MIC=210 uM). No activity against the bacteria E.coli ATCC 25922 and S.aureus ATCC 25923, or the fungi C.albicans ATCC 18804 and C.lusitaniae ATCC 56936. Does not show hemolytic activity towards rabbit erythrocytes. In Leptodactylus labyrinthicus (Labyrinth frog), this protein is Ocellatin-LB2.